Consider the following 201-residue polypeptide: Ras-related protein Rab-1B (201 aa).

Residue methionine 1 is modified to N-acetylmethionine. Positions 17, 18, 19, 20, 21, 22, 23, 33, 34, 35, 36, 39, and 40 each coordinate GTP. Serine 22 contributes to the Mg(2+) binding site. The Switch 1 signature appears at 30–45 (DDTYTESYISTIGVDF). The Mg(2+) site is built by threonine 40 and aspartate 63. Residues 64 to 83 (TAGQERFRTITSSYYRGAHG) are switch 2 region; Required for interaction with REP1/CHM. Residues 65-80 (AGQERFRTITSSYYRG) carry the Switch 2 motif. GTP contacts are provided by glycine 66, asparagine 121, lysine 122, aspartate 124, serine 151, alanine 152, and lysine 153. The tract at residues 173–201 (MGPGAASGGERPNLKIDSTPVKQAGGGCC) is disordered. 2 S-geranylgeranyl cysteine lipidation sites follow: cysteine 200 and cysteine 201. Cysteine 201 is subject to Cysteine methyl ester.

This sequence belongs to the small GTPase superfamily. Rab family. Interacts with MICAL1 and MICAL2. Interacts (in GTP-bound form) with MICALCL, MICAL1 and MILCAL3. Interacts with GDI1; the interaction requires the GDP-bound state. Interacts with CHM/REP1; the interaction requires the GDP-bound form and is necessary for prenylation by GGTase II. Interacts with RabGAP TBC1D20. Interacts (in GDP-bound form) with lipid phosphatase MTMR6 (via GRAM domain); the interaction regulates MTMR6 recruitment to the endoplasmic reticulum-Golgi intermediate compartment. Interacts (in GDP-bound form) with lipid phosphatase MTMR7. The cofactor is Mg(2+). Post-translationally, prenylated; by GGTase II, only after interaction of the substrate with Rab escort protein 1 (REP1).

Its subcellular location is the cytoplasm. It localises to the membrane. The protein localises to the preautophagosomal structure membrane. The protein resides in the perinuclear region. It carries out the reaction GTP + H2O = GDP + phosphate + H(+). Its activity is regulated as follows. Regulated by guanine nucleotide exchange factors (GEFs) which promote the exchange of bound GDP for free GTP. Regulated by GTPase activating proteins (GAPs) including TBC1D20 which increases the GTP hydrolysis activity. Inhibited by GDP dissociation inhibitors (GDIs). Its function is as follows. The small GTPases Rab are key regulators of intracellular membrane trafficking, from the formation of transport vesicles to their fusion with membranes. Rabs cycle between an inactive GDP-bound form and an active GTP-bound form that is able to recruit to membranes different set of downstream effectors directly responsible for vesicle formation, movement, tethering and fusion. Plays a role in the initial events of the autophagic vacuole development which take place at specialized regions of the endoplasmic reticulum. Regulates vesicular transport between the endoplasmic reticulum and successive Golgi compartments. Required to modulate the compacted morphology of the Golgi. Promotes the recruitment of lipid phosphatase MTMR6 to the endoplasmic reticulum-Golgi intermediate compartment. The chain is Ras-related protein Rab-1B (RAB1B) from Bos taurus (Bovine).